Reading from the N-terminus, the 398-residue chain is Exodeoxyribonuclease 7 large subunit (398 aa).

It belongs to the XseA family. In terms of assembly, heterooligomer composed of large and small subunits.

It is found in the cytoplasm. It carries out the reaction Exonucleolytic cleavage in either 5'- to 3'- or 3'- to 5'-direction to yield nucleoside 5'-phosphates.. Its function is as follows. Bidirectionally degrades single-stranded DNA into large acid-insoluble oligonucleotides, which are then degraded further into small acid-soluble oligonucleotides. This chain is Exodeoxyribonuclease 7 large subunit, found in Chlorobaculum tepidum (strain ATCC 49652 / DSM 12025 / NBRC 103806 / TLS) (Chlorobium tepidum).